Here is a 376-residue protein sequence, read N- to C-terminus: Lipoyl synthase 1, mitochondrial (376 aa).

Residues C109, C114, C120, C140, C144, C147, and S356 each coordinate [4Fe-4S] cluster. The Radical SAM core domain occupies 125–345 (ETGTATATIM…QTLGMEMGFR (221 aa)).

Belongs to the radical SAM superfamily. Lipoyl synthase family. The cofactor is [4Fe-4S] cluster.

The protein resides in the mitochondrion. The enzyme catalyses [[Fe-S] cluster scaffold protein carrying a second [4Fe-4S](2+) cluster] + N(6)-octanoyl-L-lysyl-[protein] + 2 oxidized [2Fe-2S]-[ferredoxin] + 2 S-adenosyl-L-methionine + 4 H(+) = [[Fe-S] cluster scaffold protein] + N(6)-[(R)-dihydrolipoyl]-L-lysyl-[protein] + 4 Fe(3+) + 2 hydrogen sulfide + 2 5'-deoxyadenosine + 2 L-methionine + 2 reduced [2Fe-2S]-[ferredoxin]. It functions in the pathway protein modification; protein lipoylation via endogenous pathway; protein N(6)-(lipoyl)lysine from octanoyl-[acyl-carrier-protein]: step 2/2. Catalyzes the radical-mediated insertion of two sulfur atoms into the C-6 and C-8 positions of the octanoyl moiety bound to the lipoyl domains of lipoate-dependent enzymes, thereby converting the octanoylated domains into lipoylated derivatives. The polypeptide is Lipoyl synthase 1, mitochondrial (Pisum sativum (Garden pea)).